The sequence spans 464 residues: UDP-N-acetylmuramate--L-alanine ligase (464 aa).

117–123 provides a ligand contact to ATP; that stretch reads GTHGKTT.

This sequence belongs to the MurCDEF family.

The protein localises to the cytoplasm. It catalyses the reaction UDP-N-acetyl-alpha-D-muramate + L-alanine + ATP = UDP-N-acetyl-alpha-D-muramoyl-L-alanine + ADP + phosphate + H(+). It participates in cell wall biogenesis; peptidoglycan biosynthesis. Cell wall formation. The protein is UDP-N-acetylmuramate--L-alanine ligase of Streptomyces avermitilis (strain ATCC 31267 / DSM 46492 / JCM 5070 / NBRC 14893 / NCIMB 12804 / NRRL 8165 / MA-4680).